The primary structure comprises 152 residues: Ribosomal RNA large subunit methyltransferase H (152 aa).

S-adenosyl-L-methionine-binding positions include Leu68, Gly100, and 119–124 (FGPMTW).

This sequence belongs to the RNA methyltransferase RlmH family. In terms of assembly, homodimer.

It is found in the cytoplasm. It catalyses the reaction pseudouridine(1915) in 23S rRNA + S-adenosyl-L-methionine = N(3)-methylpseudouridine(1915) in 23S rRNA + S-adenosyl-L-homocysteine + H(+). Its function is as follows. Specifically methylates the pseudouridine at position 1915 (m3Psi1915) in 23S rRNA. The polypeptide is Ribosomal RNA large subunit methyltransferase H (Rhodospirillum centenum (strain ATCC 51521 / SW)).